A 337-amino-acid polypeptide reads, in one-letter code: Anthranilate phosphoribosyltransferase (337 aa).

5-phospho-alpha-D-ribose 1-diphosphate contacts are provided by residues Gly-80, 83–84, Thr-88, 90–93, 108–116, and Ser-120; these read GD, NIST, and KHGNRAVSS. Gly-80 serves as a coordination point for anthranilate. Residue Ser-92 coordinates Mg(2+). Asn-111 contributes to the anthranilate binding site. Arg-166 lines the anthranilate pocket. The Mg(2+) site is built by Asp-224 and Glu-225.

It belongs to the anthranilate phosphoribosyltransferase family. Homodimer. Mg(2+) is required as a cofactor.

The catalysed reaction is N-(5-phospho-beta-D-ribosyl)anthranilate + diphosphate = 5-phospho-alpha-D-ribose 1-diphosphate + anthranilate. Its pathway is amino-acid biosynthesis; L-tryptophan biosynthesis; L-tryptophan from chorismate: step 2/5. Catalyzes the transfer of the phosphoribosyl group of 5-phosphorylribose-1-pyrophosphate (PRPP) to anthranilate to yield N-(5'-phosphoribosyl)-anthranilate (PRA). The sequence is that of Anthranilate phosphoribosyltransferase from Anaeromyxobacter dehalogenans (strain 2CP-1 / ATCC BAA-258).